Reading from the N-terminus, the 226-residue chain is Cobalt transport protein CbiM 2 (226 aa).

The next 6 helical transmembrane spans lie at 6-26 (GFLP…VVAY), 43-63 (MLLG…MPSV), 75-95 (LGAI…VLLF), 107-127 (TLGA…AAVF), 135-155 (FPFG…TYVT), and 181-201 (VFAL…VVVM).

The protein belongs to the CbiM family. In terms of assembly, forms an energy-coupling factor (ECF) transporter complex composed of an ATP-binding protein (A component, CbiO), a transmembrane protein (T component, CbiQ) and 2 possible substrate-capture proteins (S components, CbiM and CbiN) of unknown stoichimetry.

The protein localises to the cell inner membrane. It participates in cofactor biosynthesis; adenosylcobalamin biosynthesis. In terms of biological role, part of the energy-coupling factor (ECF) transporter complex CbiMNOQ involved in cobalt import. This is Cobalt transport protein CbiM 2 from Pelobacter propionicus (strain DSM 2379 / NBRC 103807 / OttBd1).